We begin with the raw amino-acid sequence, 125 residues long: Actin, alpha skeletal muscle (125 aa).

This sequence belongs to the actin family. In terms of assembly, polymerization of globular actin (G-actin) leads to a structural filament (F-actin) in the form of a two-stranded helix. Each actin can bind to 4 others. In terms of processing, methylated at His-75 by SETD3.

Its subcellular location is the cytoplasm. The protein localises to the cytoskeleton. Functionally, actins are highly conserved proteins that are involved in various types of cell motility and are ubiquitously expressed in all eukaryotic cells. This is Actin, alpha skeletal muscle from Pleurodeles waltl (Iberian ribbed newt).